Here is a 206-residue protein sequence, read N- to C-terminus: Ribonuclease HII (206 aa).

Positions 18–206 (LRIAGVDEVG…PVHNILYQEK (189 aa)) constitute an RNase H type-2 domain. 3 residues coordinate a divalent metal cation: D24, E25, and D115.

It belongs to the RNase HII family. Mn(2+) is required as a cofactor. Mg(2+) serves as cofactor.

It localises to the cytoplasm. It carries out the reaction Endonucleolytic cleavage to 5'-phosphomonoester.. Functionally, endonuclease that specifically degrades the RNA of RNA-DNA hybrids. In Dinoroseobacter shibae (strain DSM 16493 / NCIMB 14021 / DFL 12), this protein is Ribonuclease HII.